Reading from the N-terminus, the 356-residue chain is Photosystem II protein D1 4 (356 aa).

Transmembrane regions (helical) follow at residues 32-49 (YIGWFGVLSIPTLLAATT), 121-136 (HFLIGIWCLLGRFWEL), and 145-159 (WIAVAYSAPVIAATS). His-121 is a binding site for chlorophyll a. 2 residues coordinate [CaMn4O5] cluster: Asp-173 and Asp-192. Residues 200–221 (FHMLGVAGVFGGALLSSLHGSL) form a helical membrane-spanning segment. Position 201 (His-201) interacts with chlorophyll a. Residue His-218 participates in a quinone binding. Fe cation contacts are provided by His-218 and His-276. A helical membrane pass occupies residues 278 to 292 (LLAALPTIGIWFAAM). Residue His-336 participates in [CaMn4O5] cluster binding.

The protein belongs to the reaction center PufL/M/PsbA/D family. In terms of assembly, PSII is composed of 1 copy each of membrane proteins PsbA, PsbB, PsbC, PsbD, PsbE, PsbF, PsbH, PsbI, PsbJ, PsbK, PsbL, PsbM, PsbT, PsbX, PsbY, PsbZ, Psb30/Ycf12, peripheral proteins PsbO, CyanoQ (PsbQ), PsbU, PsbV and a large number of cofactors. It forms dimeric complexes. The D1/D2 heterodimer binds P680, chlorophylls that are the primary electron donor of PSII, and subsequent electron acceptors. It shares a non-heme iron and each subunit binds pheophytin, quinone, additional chlorophylls, carotenoids and lipids. D1 provides most of the ligands for the Mn4-Ca-O5 cluster of the oxygen-evolving complex (OEC). There is also a Cl(-1) ion associated with D1 and D2, which is required for oxygen evolution. The PSII complex binds additional chlorophylls, carotenoids and specific lipids. serves as cofactor. In terms of processing, tyr-164 forms a radical intermediate that is referred to as redox-active TyrZ, YZ or Y-Z.

The protein localises to the cellular thylakoid membrane. It carries out the reaction 2 a plastoquinone + 4 hnu + 2 H2O = 2 a plastoquinol + O2. Its function is as follows. Photosystem II (PSII) is a light-driven water:plastoquinone oxidoreductase that uses light energy to abstract electrons from H(2)O, generating O(2) and a proton gradient subsequently used for ATP formation. It consists of a core antenna complex that captures photons, and an electron transfer chain that converts photonic excitation into a charge separation. The D1/D2 (PsbA/PsbD) reaction center heterodimer binds P680, the primary electron donor of PSII as well as several subsequent electron acceptors. This Trichormus variabilis (strain ATCC 29413 / PCC 7937) (Anabaena variabilis) protein is Photosystem II protein D1 4.